Reading from the N-terminus, the 40-residue chain is Natriuretic peptide TNPd (40 aa).

A disulfide bridge links C9 with C25.

The protein belongs to the natriuretic peptide family. As to expression, expressed by the venom gland.

The protein localises to the secreted. Snake venom natriuretic peptide that exhibits vasoactive and hypotensive activity. Stimulates cGMP production through the natriuretic peptide receptor 1 (NPR1) with very high potencies for the rat NPR1 (EC(50)=18 nM), and very weak potencies over human NPR1 (30% activation at 10 uM). In Oxyuranus microlepidotus (Inland taipan), this protein is Natriuretic peptide TNPd.